The chain runs to 407 residues: Phosphopentomutase (407 aa).

Residues aspartate 11, aspartate 305, histidine 310, aspartate 346, histidine 347, and histidine 358 each contribute to the Mn(2+) site.

The protein belongs to the phosphopentomutase family. The cofactor is Mn(2+).

Its subcellular location is the cytoplasm. The catalysed reaction is 2-deoxy-alpha-D-ribose 1-phosphate = 2-deoxy-D-ribose 5-phosphate. It catalyses the reaction alpha-D-ribose 1-phosphate = D-ribose 5-phosphate. Its pathway is carbohydrate degradation; 2-deoxy-D-ribose 1-phosphate degradation; D-glyceraldehyde 3-phosphate and acetaldehyde from 2-deoxy-alpha-D-ribose 1-phosphate: step 1/2. Functionally, isomerase that catalyzes the conversion of deoxy-ribose 1-phosphate (dRib-1-P) and ribose 1-phosphate (Rib-1-P) to deoxy-ribose 5-phosphate (dRib-5-P) and ribose 5-phosphate (Rib-5-P), respectively. This chain is Phosphopentomutase, found in Legionella pneumophila (strain Corby).